The following is a 216-amino-acid chain: Probable transaldolase (216 aa).

Lys83 acts as the Schiff-base intermediate with substrate in catalysis.

The protein belongs to the transaldolase family. Type 3B subfamily.

It localises to the cytoplasm. The enzyme catalyses D-sedoheptulose 7-phosphate + D-glyceraldehyde 3-phosphate = D-erythrose 4-phosphate + beta-D-fructose 6-phosphate. It functions in the pathway carbohydrate degradation; pentose phosphate pathway; D-glyceraldehyde 3-phosphate and beta-D-fructose 6-phosphate from D-ribose 5-phosphate and D-xylulose 5-phosphate (non-oxidative stage): step 2/3. Transaldolase is important for the balance of metabolites in the pentose-phosphate pathway. This chain is Probable transaldolase, found in Thermoanaerobacter sp. (strain X514).